The sequence spans 445 residues: MLDLRLIREHPDLVREALRKLNTEAPLDEILELDERRRQLVAEVEQLKAQRNAESKRIGQLPAGPEREATIAAMRALGDRIEALDRELAAIEERLQALLLEVPNLPDPDVPVGPDESGNVVVRHWGEPRPFDFPVKPHWELAEELGLIDFARGVKIAGSRFYVLRGDLARLQRALIAWMIDLHVNEHGYLEVYPPFLVRREAMIGTGNLPKFGDNLYHDEETDLWLIPTAEVPVTNLFRDEILPPGSLPIYLVAATPCFRKERVSAGRDVRGIKRVHQFEKVEMVKFVEPDRSDEELQRLVADAEDVLRRLELPYRVVQMCTGDLSFTAAKKFDLEVWAPGSQEWLEVSSCSNFRDFQARRANIRYRPSEGARPQFVHTLNGSGLALPRTLIAIMENYQQPDGTIEIPAVLRPYMGGQQRIGRQPAYWEPAQARRAREQARAGDS.

229 to 231 (TAE) serves as a coordination point for L-serine. Residues 260-262 (RKE) and Val-276 each bind ATP. Glu-283 contacts L-serine. 347 to 350 (EVSS) contacts ATP. Ser-383 is an L-serine binding site.

It belongs to the class-II aminoacyl-tRNA synthetase family. Type-1 seryl-tRNA synthetase subfamily. Homodimer. The tRNA molecule binds across the dimer.

Its subcellular location is the cytoplasm. The enzyme catalyses tRNA(Ser) + L-serine + ATP = L-seryl-tRNA(Ser) + AMP + diphosphate + H(+). The catalysed reaction is tRNA(Sec) + L-serine + ATP = L-seryl-tRNA(Sec) + AMP + diphosphate + H(+). The protein operates within aminoacyl-tRNA biosynthesis; selenocysteinyl-tRNA(Sec) biosynthesis; L-seryl-tRNA(Sec) from L-serine and tRNA(Sec): step 1/1. Catalyzes the attachment of serine to tRNA(Ser). Is also able to aminoacylate tRNA(Sec) with serine, to form the misacylated tRNA L-seryl-tRNA(Sec), which will be further converted into selenocysteinyl-tRNA(Sec). This is Serine--tRNA ligase from Thermomicrobium roseum (strain ATCC 27502 / DSM 5159 / P-2).